The sequence spans 367 residues: Mitogen-activated protein kinase 12 (367 aa).

The Protein kinase domain maps to 27-311 (YRDLQPVGSG…AGEALAHPYF (285 aa)). ATP is bound by residues 33–41 (VGSGAYGAV) and lysine 56. The active-site Proton acceptor is the aspartate 153. Threonine 183 carries the post-translational modification Phosphothreonine; by MAP2K3 and MAP2K6. The TXY signature appears at 183–185 (TGY). Tyrosine 185 bears the Phosphotyrosine mark.

It belongs to the protein kinase superfamily. CMGC Ser/Thr protein kinase family. MAP kinase subfamily. As to quaternary structure, monomer. Interacts with the PDZ domain of the syntrophin SNTA1. Interacts with SH3BP5. Interacts with LIN7C, SCRIB and SYNJ2BP. Interacts with PTPN4; this interaction induces the activation of PTPN4 phosphatase activity. Requires Mg(2+) as cofactor. Post-translationally, dually phosphorylated on Thr-183 and Tyr-185 by MAP2K3/MKK3 and MAP2K6/MKK6, which activates the enzyme. Ubiquitinated. Ubiquitination leads to degradation by the proteasome pathway. Highly expressed in skeletal muscle and heart.

It is found in the cytoplasm. The protein resides in the nucleus. The protein localises to the mitochondrion. The enzyme catalyses L-seryl-[protein] + ATP = O-phospho-L-seryl-[protein] + ADP + H(+). It carries out the reaction L-threonyl-[protein] + ATP = O-phospho-L-threonyl-[protein] + ADP + H(+). Activated by phosphorylation on threonine and tyrosine. MAP2K3/MKK3 and MAP2K6/MKK6 are both essential for the activation of MAPK12 induced by environmental stress, whereas MAP2K6/MKK6 is the major MAPK12 activator in response to TNF-alpha. In terms of biological role, serine/threonine kinase which acts as an essential component of the MAP kinase signal transduction pathway. MAPK12 is one of the four p38 MAPKs which play an important role in the cascades of cellular responses evoked by extracellular stimuli such as pro-inflammatory cytokines or physical stress leading to direct activation of transcription factors such as ELK1 and ATF2. Accordingly, p38 MAPKs phosphorylate a broad range of proteins and it has been estimated that they may have approximately 200 to 300 substrates each. Some of the targets are downstream kinases such as MAPKAPK2, which are activated through phosphorylation and further phosphorylate additional targets. Plays a role in myoblast differentiation and also in the down-regulation of cyclin D1 in response to hypoxia in adrenal cells suggesting MAPK12 may inhibit cell proliferation while promoting differentiation. Phosphorylates DLG1. Following osmotic shock, MAPK12 in the cell nucleus increases its association with nuclear DLG1, thereby causing dissociation of DLG1-SFPQ complexes. This function is independent of its catalytic activity and could affect mRNA processing and/or gene transcription to aid cell adaptation to osmolarity changes in the environment. Regulates UV-induced checkpoint signaling and repair of UV-induced DNA damage and G2 arrest after gamma-radiation exposure. MAPK12 is involved in the regulation of SLC2A1 expression and basal glucose uptake in L6 myotubes; and negatively regulates SLC2A4 expression and contraction-mediated glucose uptake in adult skeletal muscle. C-Jun (JUN) phosphorylation is stimulated by MAPK14 and inhibited by MAPK12, leading to a distinct AP-1 regulation. MAPK12 is required for the normal kinetochore localization of PLK1, prevents chromosomal instability and supports mitotic cell viability. MAPK12-signaling is also positively regulating the expansion of transient amplifying myogenic precursor cells during muscle growth and regeneration. The chain is Mitogen-activated protein kinase 12 (MAPK12) from Homo sapiens (Human).